A 125-amino-acid chain; its full sequence is Large ribosomal subunit protein bL17 (125 aa).

This sequence belongs to the bacterial ribosomal protein bL17 family. Part of the 50S ribosomal subunit. Contacts protein L32.

This Acinetobacter baylyi (strain ATCC 33305 / BD413 / ADP1) protein is Large ribosomal subunit protein bL17.